Consider the following 137-residue polypeptide: Large ribosomal subunit protein uL16 (137 aa).

Over residues 1–16 (MLQPKRTKFRKMQKGR) the composition is skewed to basic residues. The disordered stretch occupies residues 1–22 (MLQPKRTKFRKMQKGRIRGEAK).

This sequence belongs to the universal ribosomal protein uL16 family. Part of the 50S ribosomal subunit.

Functionally, binds 23S rRNA and is also seen to make contacts with the A and possibly P site tRNAs. The sequence is that of Large ribosomal subunit protein uL16 from Jannaschia sp. (strain CCS1).